The following is a 90-amino-acid chain: Arminin 7722 (90 aa).

The N-terminal stretch at Met-1–Ala-18 is a signal peptide. A propeptide spanning residues Arg-19–Ala-59 is cleaved from the precursor. Threonine amide is present on Thr-87.

The protein belongs to the arminin family. Expressed in entodermal epithelium along the body column.

It is found in the secreted. The protein resides in the target cell membrane. Its function is as follows. Antimicrobial peptide with a broad-spectrum antimicrobial activity. Keeps its antibacterial activity under a wide range of salt concentrations that mimic physiological conditions of human blood, which is surprising, since Hydra is an obligate freshwater animal with nearly no salt tolerance. Does not affect red blood cells. The protein is Arminin 7722 of Hydra vulgaris (Hydra).